Reading from the N-terminus, the 375-residue chain is tRNA-specific 2-thiouridylase MnmA (375 aa).

ATP is bound by residues 12 to 19 (GMSGGVDS) and methionine 38. An interaction with target base in tRNA region spans residues 98 to 100 (NPD). The Nucleophile role is filled by cysteine 103. Cysteine 103 and cysteine 200 are disulfide-bonded. Glycine 127 provides a ligand contact to ATP. The segment at 150-152 (KDQ) is interaction with tRNA. Cysteine 200 functions as the Cysteine persulfide intermediate in the catalytic mechanism. The interaction with tRNA stretch occupies residues 312–313 (RY).

Belongs to the MnmA/TRMU family.

The protein resides in the cytoplasm. The enzyme catalyses S-sulfanyl-L-cysteinyl-[protein] + uridine(34) in tRNA + AH2 + ATP = 2-thiouridine(34) in tRNA + L-cysteinyl-[protein] + A + AMP + diphosphate + H(+). Catalyzes the 2-thiolation of uridine at the wobble position (U34) of tRNA, leading to the formation of s(2)U34. The polypeptide is tRNA-specific 2-thiouridylase MnmA (Lactobacillus gasseri (strain ATCC 33323 / DSM 20243 / BCRC 14619 / CIP 102991 / JCM 1131 / KCTC 3163 / NCIMB 11718 / NCTC 13722 / AM63)).